A 404-amino-acid chain; its full sequence is Sorting nexin-5 (404 aa).

Residue Ala2 is modified to N-acetylalanine. Residues 25-172 form the PX domain; that stretch reads LNVDPSLQID…HVFLEYDQDL (148 aa). A 1,2-diacyl-sn-glycero-3-phospho-(1D-myo-inositol-4,5-bisphosphate) contacts are provided by residues 40–46, 99–105, and 113–116; these read SERDKVK, FDGPREK, and EGSM. The interaction with DOCK1 stretch occupies residues 169–261; sequence DQDLSVRRKN…HSLALEEPTV (93 aa). Residues 183 to 200 are membrane-binding amphipathic helix; it reads FGGFFKSVVKSADEVLFS. The residue at position 193 (Ser193) is a Phosphoserine. In terms of domain architecture, BAR spans 202 to 404; the sequence is VKEVDDFFEQ…QSCIDLFKNN (203 aa). Lys275 carries the N6-acetyllysine modification.

This sequence belongs to the sorting nexin family. As to quaternary structure, forms heterodimers with BAR domain-containing sorting nexins SNX1 and SNX2; does not homodimerize. The heterodimers are proposed to self-assemble into helical arrays on the membrane to stabilize and expand local membrane curvature underlying endosomal tubule formation. Thought to be a component of the originally described retromer complex (also called SNX-BAR retromer) which is a pentamer containing the heterotrimeric retromer cargo-selective complex (CSC), also described as vacuolar protein sorting subcomplex (VPS), and a heterodimeric membrane-deforming subcomplex formed between SNX1 or SNX2 and SNX5 or SNX6 (also called SNX-BAR subcomplex); the respective CSC and SNX-BAR subcomplexes associate with low affinity. Interacts with SNX1, SNX2, VPS26A, VPS29, VPS35, DCTN1, DOCK1, MIB1, PIP5K1C. Interacts with HGS; increased by PIP5K1C kinase activity and by PtdIns(3P) and/or PtdIns(3,4)P2. As to expression, detected in macrophages (at protein level).

Its subcellular location is the endosome. The protein localises to the early endosome. It is found in the early endosome membrane. The protein resides in the cell membrane. It localises to the cytoplasmic vesicle membrane. Its subcellular location is the cytoplasm. The protein localises to the cell projection. It is found in the phagocytic cup. The protein resides in the ruffle. Its function is as follows. Involved in several stages of intracellular trafficking. Interacts with membranes containing phosphatidylinositol lipids. Acts in part as component of the retromer membrane-deforming SNX-BAR subcomplex. The SNX-BAR retromer mediates retrograde transport of cargo proteins from endosomes to the trans-Golgi network (TGN) and is involved in endosome-to-plasma membrane transport for cargo protein recycling. The SNX-BAR subcomplex functions to deform the donor membrane into a tubular profile called endosome-to-TGN transport carrier (ETC). Does not have in vitro vesicle-to-membrane remodeling activity. Involved in retrograde transport of lysosomal enzyme receptor IGF2R. May function as link between endosomal transport vesicles and dynactin. Plays a role in the internalization of EGFR after EGF stimulation. Involved in EGFR endosomal sorting and degradation; the function involves PIP5K1C and is retromer-independent. Together with PIP5K1C facilitates HGS interaction with ubiquitinated EGFR, which initiates EGFR sorting to intraluminal vesicles (ILVs) of the multivesicular body for subsequent lysosomal degradation. Involved in E-cadherin sorting and degradation; inhibits PIP5K1C-mediated E-cadherin degradation. Plays a role in macropinocytosis. The chain is Sorting nexin-5 (Snx5) from Mus musculus (Mouse).